A 720-amino-acid chain; its full sequence is Engulfment and cell motility protein 3 (720 aa).

Residues 307-479 (EQREQLQALR…VVREQLARTL (173 aa)) form the ELMO domain. Residues 541–663 (LRLCEGMLFR…WTDGLSALLG (123 aa)) enclose the PH domain.

As to quaternary structure, probably interacts directly with the SH3-domain of DOCK1 via its SH3-binding site. Part of a complex with DOCK1 and RAC1. Interacts with ADGRB3.

Its subcellular location is the cytoplasm. In terms of biological role, involved in cytoskeletal rearrangements required for phagocytosis of apoptotic cells and cell motility. Acts in association with DOCK1 and CRK. Was initially proposed to be required in complex with DOCK1 to activate Rac Rho small GTPases. May enhance the guanine nucleotide exchange factor (GEF) activity of DOCK1. This is Engulfment and cell motility protein 3 (Elmo3) from Rattus norvegicus (Rat).